Here is a 340-residue protein sequence, read N- to C-terminus: Lipoate--protein ligase 2 (340 aa).

Residues 31 to 222 (FLDEDILFPY…QILGIDDIKE (192 aa)) form the BPL/LPL catalytic domain. Residues Arg-73, 78 to 81 (GAVY), Lys-136, and Ala-140 contribute to the ATP site. Lys-136 is a (R)-lipoate binding site. The stretch at 293–321 (QGDIKDVEEALQGTKMTREDLMHQLKQLD) forms a coiled coil.

It belongs to the LplA family.

The enzyme catalyses L-lysyl-[lipoyl-carrier protein] + (R)-lipoate + ATP = N(6)-[(R)-lipoyl]-L-lysyl-[lipoyl-carrier protein] + AMP + diphosphate + H(+). It functions in the pathway protein modification; protein lipoylation via exogenous pathway; protein N(6)-(lipoyl)lysine from lipoate: step 1/2. It participates in protein modification; protein lipoylation via exogenous pathway; protein N(6)-(lipoyl)lysine from lipoate: step 2/2. Functionally, catalyzes specifically the lipoylation of GcvH-L (SAV0324), likely via the ATP-dependent activation of lipoate to lipoyl-AMP and the transfer of the activated lipoyl onto the lipoyl domain of the target protein. Can also utilize lipoamide as substrate for GcvH-L modification. This Staphylococcus aureus (strain Mu50 / ATCC 700699) protein is Lipoate--protein ligase 2.